The primary structure comprises 340 residues: Tartrate-resistant acid phosphatase type 5 (340 aa).

The first 20 residues, 1–20 (MDTWTVLLILQASLVLPGAV), serve as a signal peptide directing secretion. Fe cation-binding residues include Asp-41, Asp-79, Tyr-82, and Asn-118. N-linked (GlcNAc...) asparagine glycosylation is found at Asn-124 and Asn-155. Residues Cys-169 and Cys-227 are joined by a disulfide bond. The Fe cation site is built by His-213, His-248, and His-250.

Requires Fe cation as cofactor.

The protein resides in the secreted. It catalyses the reaction a phosphate monoester + H2O = an alcohol + phosphate. Functionally, uteroferrin is a phosphoprotein phosphatase, synthesized in response to progesterone. It appears to function in transplacental transport of iron in pig. The chain is Tartrate-resistant acid phosphatase type 5 (ACP5) from Sus scrofa (Pig).